Here is a 419-residue protein sequence, read N- to C-terminus: L-rhamnose isomerase (419 aa).

Mn(2+) contacts are provided by histidine 262, aspartate 294, and aspartate 296.

Belongs to the rhamnose isomerase family. In terms of assembly, homotetramer. Mn(2+) is required as a cofactor.

The protein resides in the cytoplasm. It catalyses the reaction L-rhamnopyranose = L-rhamnulose. It participates in carbohydrate degradation; L-rhamnose degradation; glycerone phosphate from L-rhamnose: step 1/3. Its function is as follows. Catalyzes the interconversion of L-rhamnose and L-rhamnulose. The polypeptide is L-rhamnose isomerase (Enterobacter sp. (strain 638)).